The primary structure comprises 296 residues: Glycine--tRNA ligase alpha subunit (296 aa).

It belongs to the class-II aminoacyl-tRNA synthetase family. Tetramer of two alpha and two beta subunits.

Its subcellular location is the cytoplasm. It carries out the reaction tRNA(Gly) + glycine + ATP = glycyl-tRNA(Gly) + AMP + diphosphate. In Parasynechococcus marenigrum (strain WH8102), this protein is Glycine--tRNA ligase alpha subunit.